The primary structure comprises 398 residues: 4-hydroxy-3-methylbut-2-enyl diphosphate reductase (398 aa).

Cys-66 serves as a coordination point for [4Fe-4S] cluster. His-96 serves as a coordination point for (2E)-4-hydroxy-3-methylbut-2-enyl diphosphate. His-96 contributes to the dimethylallyl diphosphate binding site. His-96 contributes to the isopentenyl diphosphate binding site. Cys-157 serves as a coordination point for [4Fe-4S] cluster. Position 185 (His-185) interacts with (2E)-4-hydroxy-3-methylbut-2-enyl diphosphate. Dimethylallyl diphosphate is bound at residue His-185. Isopentenyl diphosphate is bound at residue His-185. Catalysis depends on Glu-187, which acts as the Proton donor. (2E)-4-hydroxy-3-methylbut-2-enyl diphosphate is bound at residue Thr-250. Cys-288 provides a ligand contact to [4Fe-4S] cluster. 4 residues coordinate (2E)-4-hydroxy-3-methylbut-2-enyl diphosphate: Ser-317, Ser-318, Asn-319, and Ser-379. The dimethylallyl diphosphate site is built by Ser-317, Ser-318, Asn-319, and Ser-379. Ser-317, Ser-318, Asn-319, and Ser-379 together coordinate isopentenyl diphosphate.

This sequence belongs to the IspH family. [4Fe-4S] cluster is required as a cofactor.

The enzyme catalyses isopentenyl diphosphate + 2 oxidized [2Fe-2S]-[ferredoxin] + H2O = (2E)-4-hydroxy-3-methylbut-2-enyl diphosphate + 2 reduced [2Fe-2S]-[ferredoxin] + 2 H(+). It carries out the reaction dimethylallyl diphosphate + 2 oxidized [2Fe-2S]-[ferredoxin] + H2O = (2E)-4-hydroxy-3-methylbut-2-enyl diphosphate + 2 reduced [2Fe-2S]-[ferredoxin] + 2 H(+). Its pathway is isoprenoid biosynthesis; dimethylallyl diphosphate biosynthesis; dimethylallyl diphosphate from (2E)-4-hydroxy-3-methylbutenyl diphosphate: step 1/1. The protein operates within isoprenoid biosynthesis; isopentenyl diphosphate biosynthesis via DXP pathway; isopentenyl diphosphate from 1-deoxy-D-xylulose 5-phosphate: step 6/6. Catalyzes the conversion of 1-hydroxy-2-methyl-2-(E)-butenyl 4-diphosphate (HMBPP) into a mixture of isopentenyl diphosphate (IPP) and dimethylallyl diphosphate (DMAPP). Acts in the terminal step of the DOXP/MEP pathway for isoprenoid precursor biosynthesis. This Prochlorococcus marinus (strain MIT 9313) protein is 4-hydroxy-3-methylbut-2-enyl diphosphate reductase.